Consider the following 412-residue polypeptide: Gamma-glutamyl phosphate reductase (412 aa).

This sequence belongs to the gamma-glutamyl phosphate reductase family.

The protein resides in the cytoplasm. It carries out the reaction L-glutamate 5-semialdehyde + phosphate + NADP(+) = L-glutamyl 5-phosphate + NADPH + H(+). The protein operates within amino-acid biosynthesis; L-proline biosynthesis; L-glutamate 5-semialdehyde from L-glutamate: step 2/2. Functionally, catalyzes the NADPH-dependent reduction of L-glutamate 5-phosphate into L-glutamate 5-semialdehyde and phosphate. The product spontaneously undergoes cyclization to form 1-pyrroline-5-carboxylate. This Lactiplantibacillus plantarum (strain ATCC BAA-793 / NCIMB 8826 / WCFS1) (Lactobacillus plantarum) protein is Gamma-glutamyl phosphate reductase.